Reading from the N-terminus, the 399-residue chain is Cytochrome P450 FAS1 (399 aa).

A heme-binding site is contributed by cysteine 349.

This sequence belongs to the cytochrome P450 family. The cofactor is heme.

The protein resides in the cytoplasm. Its function is as follows. May be involved in the biosynthesis of cytokinin phytohormones and in host plant fasciation (leafy gall). This chain is Cytochrome P450 FAS1 (fas1), found in Rhodococcoides fascians (Rhodococcus fascians).